Consider the following 289-residue polypeptide: MFGSAHGDTTSSDTSGRRPLRLVVLPLLLALSSCKVDLYTQLQEREANEMLALLMDSGVDAVRVAGKDGTSTIQVDEKLLAFSIKLLNAKGLPRQSFKNLGEIFQGSGLIASPTEERARYVYALSEELSHTISDIDGVFSARVHVVLPHNDLLRAGDTPSSASVFIRHDAKTNLPALLPKIKMLVAESIEGLAYDKVEVVLVPVERSAQEQRSLLATDLAQASRPIPEPLLAVAVGVSAAVFAVTCYLLFIVLGHRRRQLTGELSRVQERPGVSALAAIRKKIPGLGRR.

The signal sequence occupies residues 1–33 (MFGSAHGDTTSSDTSGRRPLRLVVLPLLLALSS). A lipid anchor (N-palmitoyl cysteine) is attached at C34. Residue C34 is the site of S-diacylglycerol cysteine attachment. A helical transmembrane segment spans residues 233–253 (VAVGVSAAVFAVTCYLLFIVL).

Belongs to the YscJ lipoprotein family.

Its subcellular location is the cell outer membrane. This is Nodulation protein NolT (nolT) from Sinorhizobium fredii (strain NBRC 101917 / NGR234).